Here is a 560-residue protein sequence, read N- to C-terminus: Platelet glycoprotein V (560 aa).

Residues 1 to 16 (MLRGTLLCAVLGLLRA) form the signal peptide. Positions 17-50 (QPFPCPPACKCVFRDAAQCSGGDVARISALGLPT) constitute an LRRNT domain. Over 17–523 (QPFPCPPACK…KGQDHSPFWG (507 aa)) the chain is Extracellular. Asn51 carries an N-linked (GlcNAc...) asparagine glycan. LRR repeat units follow at residues 75–96 (VLQR…TFSD), 99–120 (KLKT…LLDK), 123–144 (LLEQ…MFQK), 147–168 (NLQE…LFTN), 171–193 (NLKL…LGAQ), 195–216 (KLER…LLNS), 219–240 (ALTE…AFDR), 243–264 (NLSS…LFLH), 267–288 (NLTL…LFGE), 291–312 (GLQE…AFRN), 340–361 (ELQV…LLRG), 364–385 (KLRQ…LFRN), and 388–409 (SLES…VFGA). An N-linked (GlcNAc...) (complex) asparagine glycan is attached at Asn181. An N-linked (GlcNAc...) (complex) asparagine glycan is attached at Asn243. N-linked (GlcNAc...) asparagine glycosylation is found at Asn267, Asn298, and Asn312. An N-linked (GlcNAc...) asparagine glycan is attached at Asn385. One can recognise an LRRCT domain in the interval 421–474 (NSWRCDCGLGPFLGWLRQHLGLVGGEEPPRCAGPGAHAGLPLWALPGGDAECPG). The tract at residues 469–498 (DAECPGPRGPPPRPAADSSSEAPVHPALAP) is disordered. The N-linked (GlcNAc...) asparagine glycan is linked to Asn499. Residues 524–544 (FYFLLLAVQAMITVIIVFAMI) traverse the membrane as a helical segment. Residues 545–560 (KIGQLFRKLIRERALG) lie on the Cytoplasmic side of the membrane.

Post-translationally, the N-terminus is blocked. In terms of tissue distribution, platelets and megakaryocytes.

It is found in the membrane. Functionally, the GPIb-V-IX complex functions as the vWF receptor and mediates vWF-dependent platelet adhesion to blood vessels. The adhesion of platelets to injured vascular surfaces in the arterial circulation is a critical initiating event in hemostasis. This is Platelet glycoprotein V (GP5) from Homo sapiens (Human).